A 278-amino-acid chain; its full sequence is Envelope glycoprotein L (278 aa).

The signal sequence occupies residues 1–32 (MCRRPDCGFSFSPGPVILLWCCLLLSIVSSAA). Residues 43 to 256 (VPAECPELTR…DKYYAGLPPE (214 aa)) form the gL betaherpesvirus-type domain. C154 and C159 are joined by a disulfide.

The protein belongs to the herpesviridae glycoprotein L (gL) family. Betaherpesvirinae gL subfamily. In terms of assembly, interacts with glycoprotein H (gH); this interaction is necessary for the correct processing and cell surface expression of gH. Forms the envelope pentamer complex (PC) composed of gH, gL, UL128, UL130, and UL131A. The pentamer interacts with host NRP2. Forms the envelope trimer complex composed of gH, gL, and gO. The trimer interacts with host PDGFRA. The trimer also interacts with host EPHA2.

It is found in the virion membrane. The protein localises to the host cell membrane. Its subcellular location is the host Golgi apparatus. The protein resides in the host trans-Golgi network. In terms of biological role, the heterodimer glycoprotein H-glycoprotein L is required for the fusion of viral and plasma membranes leading to virus entry into the host cell. Acts as a functional inhibitor of gH and maintains gH in an inhibited form. Upon binding to host integrins, gL dissociates from gH leading to activation of the viral fusion glycoproteins gB and gH. In human cytomegalovirus, forms two distincts complexes to mediate viral entry, a trimer and a pentamer at the surface of the virion envelope. The gH-gL-gO trimer is required for infection in fibroblasts by interacting with host PDGFRA, and in glioblastoma cells by interacting with host EPHA2. The gH-gL-UL128-UL130-UL131A pentamer is essential for viral entry in epithelial, endothelial and myeloid cells via interaction with host NRP2. This is Envelope glycoprotein L from Human cytomegalovirus (strain 119) (HHV-5).